Here is a 190-residue protein sequence, read N- to C-terminus: Probable calcium-binding protein CML27 (190 aa).

EF-hand domains follow at residues 27 to 62 (LNAL…LGLG), 115 to 150 (DDEG…LGLP), and 153 to 188 (RNLA…ITVW). Residues D40, N42, D44, E46, E51, D128, D130, D132, E139, D166, D168, D170, R172, and E177 each contribute to the Ca(2+) site.

In terms of biological role, potential calcium sensor. The polypeptide is Probable calcium-binding protein CML27 (CML27) (Oryza sativa subsp. japonica (Rice)).